The sequence spans 68 residues: uncharacterized protein (68 aa).

An N-terminal signal peptide occupies residues 1–28 (MNKEQSADDPSVDLIRVKNMLNSTISMS).

This is an uncharacterized protein from Escherichia coli (strain K12).